Consider the following 94-residue polypeptide: uncharacterized protein (94 aa).

The N-terminal stretch at 1–19 (MKFSGLILGALALVSGAIA) is a signal peptide.

This sequence belongs to the protease inhibitor I9 family.

This is an uncharacterized protein from Neurospora crassa (strain ATCC 24698 / 74-OR23-1A / CBS 708.71 / DSM 1257 / FGSC 987).